Reading from the N-terminus, the 470-residue chain is Alpha-1A adrenergic receptor (470 aa).

Topologically, residues Met-1 to Val-27 are extracellular. N-linked (GlcNAc...) asparagine glycosylation is found at Asn-9 and Asn-12. The helical transmembrane segment at Val-28–Val-51 threads the bilayer. The Cytoplasmic segment spans residues Val-52–Phe-64. The helical transmembrane segment at Ile-65–Ile-88 threads the bilayer. Over Leu-89–Cys-99 the chain is Extracellular. Cys-99 and Cys-176 are oxidised to a cystine. A helical membrane pass occupies residues Asn-100–Val-122. Over Asp-123–Ala-143 the chain is Cytoplasmic. The helical transmembrane segment at Leu-144–Glu-167 threads the bilayer. The Extracellular portion of the chain corresponds to Pro-168–Glu-181. A helical membrane pass occupies residues Pro-182–Cys-205. At Arg-206–Thr-271 the chain is on the cytoplasmic side. The helical transmembrane segment at Leu-272–Ile-295 threads the bilayer. Residues Phe-296–Asp-303 are Extracellular-facing. A helical membrane pass occupies residues Thr-304–Ser-327. Residues Asn-328–Val-470 are Cytoplasmic-facing. A lipid anchor (S-palmitoyl cysteine) is attached at Cys-343. The tract at residues Gly-375 to Glu-416 is disordered. Positions Ser-381–Pro-392 are enriched in polar residues.

It belongs to the G-protein coupled receptor 1 family. Adrenergic receptor subfamily. ADRA1A sub-subfamily.

It localises to the cell membrane. Functionally, this alpha-adrenergic receptor mediates its action by association with G proteins that activate a phosphatidylinositol-calcium second messenger system. The sequence is that of Alpha-1A adrenergic receptor (adra1a) from Oryzias latipes (Japanese rice fish).